Reading from the N-terminus, the 395-residue chain is Chorismate synthase (395 aa).

2 residues coordinate NADP(+): arginine 40 and arginine 46. FMN contacts are provided by residues 135–137 (RAS) and 256–257 (QA). Basic and acidic residues predominate over residues 272 to 283 (RRGSQAHDEMRP). A disordered region spans residues 272–296 (RRGSQAHDEMRPGPDGILRSTNRAG). FMN is bound by residues glycine 300, 315-319 (KPIST), and arginine 341.

The protein belongs to the chorismate synthase family. In terms of assembly, homotetramer. Requires FMNH2 as cofactor.

It catalyses the reaction 5-O-(1-carboxyvinyl)-3-phosphoshikimate = chorismate + phosphate. It functions in the pathway metabolic intermediate biosynthesis; chorismate biosynthesis; chorismate from D-erythrose 4-phosphate and phosphoenolpyruvate: step 7/7. Its function is as follows. Catalyzes the anti-1,4-elimination of the C-3 phosphate and the C-6 proR hydrogen from 5-enolpyruvylshikimate-3-phosphate (EPSP) to yield chorismate, which is the branch point compound that serves as the starting substrate for the three terminal pathways of aromatic amino acid biosynthesis. This reaction introduces a second double bond into the aromatic ring system. In Rhodococcus opacus (strain B4), this protein is Chorismate synthase.